The sequence spans 461 residues: METLFNGTLSVGGRDQESTGFAWWSGNARLINLSGKLLGAHVAHAGLIVFWAGAMNLFEVAHFIPEKPMYEQGLILLPHLASLGYGVGPGGEVVDTFPYFVSGVLHLISSAVLGFGGVYHSLIGPETLEESFPFFGYVWKDKNKMSTILGIHLVILGFGAWLLVWKAMYFGGLFDPWSVGGGDVRVITNPTISPGIIFGYLLKSPFGGDGWIVSVDNMEDVVGGHIWIGTLEILGGIWHILTKPWAWARRAFVWSGEAYLSYSLGAVSLMAFIACCMSWFNNTVYPSEFYGPTGPEASQSQAFTFLVRDQRLGANVASAQGPTGLGKYLMRSPTGEIIFGGETMRFWDFRGPWLEPLRGPNGLDLNKLKNDIQPWQERRAAEYMTHAPLGSLNSVGGVATEINATNFVSPRSWLACSHFVLGFFFFVGHLWHAGRARAAAAGFEKGIDRDNEPVLSMKPLD.

A propeptide spanning residues 1–2 (ME) is cleaved from the precursor. Position 3 is an N-acetylthreonine (Thr3). Thr3 carries the post-translational modification Phosphothreonine. A run of 5 helical transmembrane segments spans residues 57–81 (LFEV…PHLA), 122–143 (LIGP…KDKN), 166–188 (KAMY…RVIT), 243–263 (KPWA…LSYS), and 279–300 (WFNN…ASQS). Glu355 is a binding site for [CaMn4O5] cluster. Residues 435–459 (RARAAAAGFEKGIDRDNEPVLSMKP) traverse the membrane as a helical segment.

This sequence belongs to the PsbB/PsbC family. PsbC subfamily. In terms of assembly, PSII is composed of 1 copy each of membrane proteins PsbA, PsbB, PsbC, PsbD, PsbE, PsbF, PsbH, PsbI, PsbJ, PsbK, PsbL, PsbM, PsbT, PsbX, PsbY, PsbZ, Psb30/Ycf12, at least 3 peripheral proteins of the oxygen-evolving complex and a large number of cofactors. It forms dimeric complexes. Binds multiple chlorophylls and provides some of the ligands for the Ca-4Mn-5O cluster of the oxygen-evolving complex. It may also provide a ligand for a Cl- that is required for oxygen evolution. PSII binds additional chlorophylls, carotenoids and specific lipids. serves as cofactor.

The protein resides in the plastid. Its subcellular location is the chloroplast thylakoid membrane. Functionally, one of the components of the core complex of photosystem II (PSII). It binds chlorophyll and helps catalyze the primary light-induced photochemical processes of PSII. PSII is a light-driven water:plastoquinone oxidoreductase, using light energy to abstract electrons from H(2)O, generating O(2) and a proton gradient subsequently used for ATP formation. This Tupiella akineta (Green alga) protein is Photosystem II CP43 reaction center protein.